Here is a 210-residue protein sequence, read N- to C-terminus: Na(+)-translocating NADH-quinone reductase subunit D (210 aa).

Helical transmembrane passes span 9–29 (SVLI…LGVC), 42–62 (LVMT…ISLI), 72–92 (IIVQ…VLQA), 103–123 (VFVG…AFAM), 131–151 (FMDG…VGFV), and 178–198 (NGLL…IWII).

Belongs to the NqrDE/RnfAE family. As to quaternary structure, composed of six subunits; NqrA, NqrB, NqrC, NqrD, NqrE and NqrF.

Its subcellular location is the cell inner membrane. It catalyses the reaction a ubiquinone + n Na(+)(in) + NADH + H(+) = a ubiquinol + n Na(+)(out) + NAD(+). In terms of biological role, NQR complex catalyzes the reduction of ubiquinone-1 to ubiquinol by two successive reactions, coupled with the transport of Na(+) ions from the cytoplasm to the periplasm. NqrA to NqrE are probably involved in the second step, the conversion of ubisemiquinone to ubiquinol. In Shewanella piezotolerans (strain WP3 / JCM 13877), this protein is Na(+)-translocating NADH-quinone reductase subunit D.